Reading from the N-terminus, the 277-residue chain is Large ribosomal subunit protein uL2 (277 aa).

The disordered stretch occupies residues 212-277 (RWRGKRPHVR…KFIVRGRKSK (66 aa)). A compositionally biased stretch (basic residues) spans 254–277 (TAGKKTRDKKKASTKFIVRGRKSK).

It belongs to the universal ribosomal protein uL2 family. Part of the 50S ribosomal subunit. Forms a bridge to the 30S subunit in the 70S ribosome.

In terms of biological role, one of the primary rRNA binding proteins. Required for association of the 30S and 50S subunits to form the 70S ribosome, for tRNA binding and peptide bond formation. It has been suggested to have peptidyltransferase activity; this is somewhat controversial. Makes several contacts with the 16S rRNA in the 70S ribosome. This is Large ribosomal subunit protein uL2 from Leuconostoc mesenteroides subsp. mesenteroides (strain ATCC 8293 / DSM 20343 / BCRC 11652 / CCM 1803 / JCM 6124 / NCDO 523 / NBRC 100496 / NCIMB 8023 / NCTC 12954 / NRRL B-1118 / 37Y).